A 130-amino-acid polypeptide reads, in one-letter code: Small ribosomal subunit protein uS8 (130 aa).

Belongs to the universal ribosomal protein uS8 family. As to quaternary structure, part of the 30S ribosomal subunit. Contacts proteins S5 and S12.

One of the primary rRNA binding proteins, it binds directly to 16S rRNA central domain where it helps coordinate assembly of the platform of the 30S subunit. This is Small ribosomal subunit protein uS8 from Stutzerimonas stutzeri (strain A1501) (Pseudomonas stutzeri).